A 446-amino-acid chain; its full sequence is Phosphoglucosamine mutase (446 aa).

Residue Ser101 is the Phosphoserine intermediate of the active site. Positions 101, 240, 242, and 244 each coordinate Mg(2+). Ser101 carries the post-translational modification Phosphoserine.

This sequence belongs to the phosphohexose mutase family. Mg(2+) serves as cofactor. In terms of processing, activated by phosphorylation.

The enzyme catalyses alpha-D-glucosamine 1-phosphate = D-glucosamine 6-phosphate. Its function is as follows. Catalyzes the conversion of glucosamine-6-phosphate to glucosamine-1-phosphate. This Coxiella burnetii (strain CbuK_Q154) (Coxiella burnetii (strain Q154)) protein is Phosphoglucosamine mutase.